A 353-amino-acid chain; its full sequence is tRNA N6-adenosine threonylcarbamoyltransferase (353 aa).

Positions 119 and 123 each coordinate Fe cation. Substrate-binding positions include Leu145–Gly149, Asp178, Gly191, and Asn285. Asp313 is a Fe cation binding site.

It belongs to the KAE1 / TsaD family. Fe(2+) is required as a cofactor.

Its subcellular location is the cytoplasm. It catalyses the reaction L-threonylcarbamoyladenylate + adenosine(37) in tRNA = N(6)-L-threonylcarbamoyladenosine(37) in tRNA + AMP + H(+). Its function is as follows. Required for the formation of a threonylcarbamoyl group on adenosine at position 37 (t(6)A37) in tRNAs that read codons beginning with adenine. Is involved in the transfer of the threonylcarbamoyl moiety of threonylcarbamoyl-AMP (TC-AMP) to the N6 group of A37, together with TsaE and TsaB. TsaD likely plays a direct catalytic role in this reaction. This chain is tRNA N6-adenosine threonylcarbamoyltransferase, found in Magnetococcus marinus (strain ATCC BAA-1437 / JCM 17883 / MC-1).